A 218-amino-acid chain; its full sequence is Histidine biosynthesis bifunctional protein HisIE (218 aa).

Positions 1–131 (MAPHQFKSKG…GDYDLPPADT (131 aa)) are phosphoribosyl-AMP cyclohydrolase. Residues 132 to 218 (LSQVFRVVEE…VYRALQQRRR (87 aa)) form a phosphoribosyl-ATP pyrophosphohydrolase region.

It in the N-terminal section; belongs to the PRA-CH family. This sequence in the C-terminal section; belongs to the PRA-PH family.

It is found in the cytoplasm. It carries out the reaction 1-(5-phospho-beta-D-ribosyl)-ATP + H2O = 1-(5-phospho-beta-D-ribosyl)-5'-AMP + diphosphate + H(+). The enzyme catalyses 1-(5-phospho-beta-D-ribosyl)-5'-AMP + H2O = 1-(5-phospho-beta-D-ribosyl)-5-[(5-phospho-beta-D-ribosylamino)methylideneamino]imidazole-4-carboxamide. The protein operates within amino-acid biosynthesis; L-histidine biosynthesis; L-histidine from 5-phospho-alpha-D-ribose 1-diphosphate: step 2/9. It participates in amino-acid biosynthesis; L-histidine biosynthesis; L-histidine from 5-phospho-alpha-D-ribose 1-diphosphate: step 3/9. The polypeptide is Histidine biosynthesis bifunctional protein HisIE (Gloeobacter violaceus (strain ATCC 29082 / PCC 7421)).